The following is a 572-amino-acid chain: Proline--tRNA ligase (572 aa).

This sequence belongs to the class-II aminoacyl-tRNA synthetase family. ProS type 1 subfamily. As to quaternary structure, homodimer.

The protein resides in the cytoplasm. It catalyses the reaction tRNA(Pro) + L-proline + ATP = L-prolyl-tRNA(Pro) + AMP + diphosphate. Its function is as follows. Catalyzes the attachment of proline to tRNA(Pro) in a two-step reaction: proline is first activated by ATP to form Pro-AMP and then transferred to the acceptor end of tRNA(Pro). As ProRS can inadvertently accommodate and process non-cognate amino acids such as alanine and cysteine, to avoid such errors it has two additional distinct editing activities against alanine. One activity is designated as 'pretransfer' editing and involves the tRNA(Pro)-independent hydrolysis of activated Ala-AMP. The other activity is designated 'posttransfer' editing and involves deacylation of mischarged Ala-tRNA(Pro). The misacylated Cys-tRNA(Pro) is not edited by ProRS. This Escherichia coli O139:H28 (strain E24377A / ETEC) protein is Proline--tRNA ligase.